We begin with the raw amino-acid sequence, 141 residues long: Hemoglobin subunit alpha (141 aa).

The Globin domain occupies 1 to 141 (VLSSADKTNI…VSTVLTSKYR (141 aa)). S3 carries the phosphoserine modification. K7 carries the post-translational modification N6-succinyllysine. Residue T8 is modified to Phosphothreonine. The residue at position 11 (K11) is an N6-succinyllysine. The residue at position 16 (K16) is an N6-acetyllysine; alternate. Residue K16 is modified to N6-succinyllysine; alternate. Y24 is subject to Phosphotyrosine. S35 bears the Phosphoserine mark. An N6-succinyllysine modification is found at K40. S49 is subject to Phosphoserine. O2 is bound at residue H58. H87 lines the heme b pocket. At S102 the chain carries Phosphoserine. T108 is subject to Phosphothreonine. Residues S124 and S131 each carry the phosphoserine modification. A phosphothreonine mark is found at T134 and T137. Position 138 is a phosphoserine (S138).

The protein belongs to the globin family. As to quaternary structure, heterotetramer of two alpha chains and two beta chains. In terms of tissue distribution, red blood cells.

Functionally, involved in oxygen transport from the lung to the various peripheral tissues. Hemopressin acts as an antagonist peptide of the cannabinoid receptor CNR1. Hemopressin-binding efficiently blocks cannabinoid receptor CNR1 and subsequent signaling. This Rousettus aegyptiacus (Egyptian fruit bat) protein is Hemoglobin subunit alpha (HBA).